The chain runs to 157 residues: Tripartite terminase subunit 2 (157 aa).

The segment at 1 to 69 (MSWAKQRVPF…DGEDGHALPD (69 aa)) is disordered. The span at 11-27 (LDDDDGEEENDVQDDVD) shows a compositional bias: acidic residues.

This sequence belongs to the herpesviridae TRM2 protein family. As to quaternary structure, associates with TRM1 and TRM3 to form the tripartite terminase complex.

It is found in the host nucleus. Functionally, component of the molecular motor that translocates viral genomic DNA in empty capsid during DNA packaging. Forms a tripartite terminase complex together with TRM1 and TRM3 in the host cytoplasm. Once the complex reaches the host nucleus, it interacts with the capsid portal vertex. This portal forms a ring in which genomic DNA is translocated into the capsid. This Homo sapiens (Human) protein is Tripartite terminase subunit 2.